A 109-amino-acid chain; its full sequence is MNVQLILRSLTYKEEQRVIIRPIGERVLLKHQKKEEVTKGGIYIPESARQEKKEGIVIAVGTFEDGKELPLKKGDHVIYGGYQADEIEIDDEKYIFVDFKDILATVVEE.

Belongs to the GroES chaperonin family. Heptamer of 7 subunits arranged in a ring. Interacts with the chaperonin GroEL.

The protein localises to the cytoplasm. Functionally, together with the chaperonin GroEL, plays an essential role in assisting protein folding. The GroEL-GroES system forms a nano-cage that allows encapsulation of the non-native substrate proteins and provides a physical environment optimized to promote and accelerate protein folding. GroES binds to the apical surface of the GroEL ring, thereby capping the opening of the GroEL channel. The polypeptide is Co-chaperonin GroES (Methanosarcina acetivorans (strain ATCC 35395 / DSM 2834 / JCM 12185 / C2A)).